Consider the following 349-residue polypeptide: tRNA pseudouridine synthase D (349 aa).

F27 serves as a coordination point for substrate. D80 (nucleophile) is an active-site residue. Residue N129 participates in substrate binding. A TRUD domain is found at 155–303 (GVPNYFGPQR…VEAARRAMLL (149 aa)). Substrate is bound at residue F329.

The protein belongs to the pseudouridine synthase TruD family.

The catalysed reaction is uridine(13) in tRNA = pseudouridine(13) in tRNA. Responsible for synthesis of pseudouridine from uracil-13 in transfer RNAs. The sequence is that of tRNA pseudouridine synthase D from Cronobacter sakazakii (strain ATCC BAA-894) (Enterobacter sakazakii).